Consider the following 114-residue polypeptide: Large ribosomal subunit protein uL22c (114 aa).

The protein belongs to the universal ribosomal protein uL22 family. In terms of assembly, part of the 50S ribosomal subunit.

The protein localises to the plastid. Its subcellular location is the chloroplast. This protein binds specifically to 23S rRNA. Its function is as follows. The globular domain of the protein is located near the polypeptide exit tunnel on the outside of the subunit, while an extended beta-hairpin is found that lines the wall of the exit tunnel in the center of the 70S ribosome. In Gracilaria tenuistipitata (Red alga), this protein is Large ribosomal subunit protein uL22c (rpl22).